A 32-amino-acid polypeptide reads, in one-letter code: Phospholipase A2 (32 aa).

Ca(2+) is bound by residues Tyr-16, Gly-18, and Gly-20.

Requires Ca(2+) as cofactor. In terms of tissue distribution, expressed by the venom gland.

The protein localises to the secreted. The catalysed reaction is a 1,2-diacyl-sn-glycero-3-phosphocholine + H2O = a 1-acyl-sn-glycero-3-phosphocholine + a fatty acid + H(+). PLA2 catalyzes the calcium-dependent hydrolysis of the 2-acyl groups in 3-sn-phosphoglycerides. This chain is Phospholipase A2, found in Micrurus lemniscatus (South American coral snake).